The chain runs to 767 residues: Protein transport protein Sec23A (767 aa).

Zn(2+) contacts are provided by cysteine 61, cysteine 66, cysteine 85, and cysteine 88. A Gelsolin-like repeat occupies 634-720 (PEPVLLDSSS…EHGGSQARFL (87 aa)).

Belongs to the SEC23/SEC24 family. SEC23 subfamily. In terms of assembly, COPII is composed of at least five proteins: the Sec23/24 complex, the Sec13/31 complex and Sar1.

The protein resides in the cytoplasmic vesicle. It is found in the COPII-coated vesicle membrane. The protein localises to the endoplasmic reticulum membrane. Its subcellular location is the cytoplasm. It localises to the cytosol. In terms of biological role, component of the coat protein complex II (COPII) which promotes the formation of transport vesicles from the endoplasmic reticulum (ER). The coat has two main functions, the physical deformation of the endoplasmic reticulum membrane into vesicles and the selection of cargo molecules for their transport to the Golgi complex. The protein is Protein transport protein Sec23A of Gallus gallus (Chicken).